Here is a 335-residue protein sequence, read N- to C-terminus: GTPase Obg (335 aa).

Positions 1-159 constitute an Obg domain; sequence MKFVDSAKIS…YELEMELKLM (159 aa). The OBG-type G domain maps to 160–323; it reads ADVGLVGFPN…LKDELWRQVS (164 aa). GTP is bound by residues 166–173, 191–195, 213–216, 280–283, and 304–306; these read GFPNAGKS, FTTLV, DIPG, TKMD, and SSV. S173 and T193 together coordinate Mg(2+).

The protein belongs to the TRAFAC class OBG-HflX-like GTPase superfamily. OBG GTPase family. As to quaternary structure, monomer. Mg(2+) is required as a cofactor.

The protein localises to the cytoplasm. Its function is as follows. An essential GTPase which binds GTP, GDP and possibly (p)ppGpp with moderate affinity, with high nucleotide exchange rates and a fairly low GTP hydrolysis rate. Plays a role in control of the cell cycle, stress response, ribosome biogenesis and in those bacteria that undergo differentiation, in morphogenesis control. In Chlorobaculum tepidum (strain ATCC 49652 / DSM 12025 / NBRC 103806 / TLS) (Chlorobium tepidum), this protein is GTPase Obg.